Here is a 259-residue protein sequence, read N- to C-terminus: MTLPPPADFVVAIPARYASKRLPGKPLQRIGNRPMIQHVAERALLAGARAVWVATDDARIAEAIAHLPGVHVAMTGTAHLSGTDRLAECARIAGWDEQTCVVNLQGDEPFAPAAGIGAVADLLQHSGAEMATLAAPVDSAHDLFDPNVVKLVRNARGDALYFSRAPIPWHRDSFASQRDSVPAEGQWLRHIGIYGYRAGFLQRFAAMPPGMLERIESLEQLRVMEAGYRIAVAVTPEPFPPGIDTPDDLARAQARVASA.

It belongs to the KdsB family.

The protein localises to the cytoplasm. The catalysed reaction is 3-deoxy-alpha-D-manno-oct-2-ulosonate + CTP = CMP-3-deoxy-beta-D-manno-octulosonate + diphosphate. Its pathway is nucleotide-sugar biosynthesis; CMP-3-deoxy-D-manno-octulosonate biosynthesis; CMP-3-deoxy-D-manno-octulosonate from 3-deoxy-D-manno-octulosonate and CTP: step 1/1. It functions in the pathway bacterial outer membrane biogenesis; lipopolysaccharide biosynthesis. Activates KDO (a required 8-carbon sugar) for incorporation into bacterial lipopolysaccharide in Gram-negative bacteria. The protein is 3-deoxy-manno-octulosonate cytidylyltransferase of Xanthomonas oryzae pv. oryzae (strain KACC10331 / KXO85).